A 966-amino-acid polypeptide reads, in one-letter code: Translation initiation factor IF-2 (966 aa).

Basic and acidic residues-rich tracts occupy residues 99–113 (KRDE…EAAD), 123–183 (EQAR…KAEE), 197–212 (DASR…RVAV), 220–249 (AADD…EAEA), and 266–277 (PSERKAEEKKAE). The segment at 99–382 (KRDEAGADQH…NFQAPTEPVV (284 aa)) is disordered. Residues 304–315 (AATTTTTTATTT) show a composition bias toward low complexity. Residues 346–359 (SSGGVGGWRGGPRG) are compositionally biased toward gly residues. Positions 466–635 (PRPPVVTVMG…LLQAEVLELK (170 aa)) constitute a tr-type G domain. The segment at 475-482 (GHVDHGKT) is G1. A GTP-binding site is contributed by 475 to 482 (GHVDHGKT). Residues 500–504 (GITQH) are G2. Positions 521 to 524 (DTPG) are G3. Residues 521-525 (DTPGH) and 575-578 (NKID) each bind GTP. The tract at residues 575–578 (NKID) is G4. Residues 611–613 (SAK) are G5.

Belongs to the TRAFAC class translation factor GTPase superfamily. Classic translation factor GTPase family. IF-2 subfamily.

The protein localises to the cytoplasm. Functionally, one of the essential components for the initiation of protein synthesis. Protects formylmethionyl-tRNA from spontaneous hydrolysis and promotes its binding to the 30S ribosomal subunits. Also involved in the hydrolysis of GTP during the formation of the 70S ribosomal complex. This chain is Translation initiation factor IF-2, found in Cupriavidus pinatubonensis (strain JMP 134 / LMG 1197) (Cupriavidus necator (strain JMP 134)).